The chain runs to 645 residues: Cyclin-D-binding Myb-like transcription factor 1 (645 aa).

2 disordered regions span residues 34–71 (QNDG…STEY) and 95–119 (RDEE…KKGE). 2 stretches are compositionally biased toward acidic residues: residues 36-46 (DGEDLGSDETT) and 95-105 (RDEELESDDLS). Residues 219–257 (GKYTDEEINKLKELRQKHGNDWATIGSALGRSASSVKDR) form the Myb-like 1 domain. The region spanning 262 to 327 (KDTCNTGKWT…KWLNYLNWKQ (66 aa)) is the HTH myb-type domain. A DNA-binding region (H-T-H motif) is located at residues 300–323 (WASVAELVGTRSEKQCRSKWLNYL). The Myb-like 2 domain maps to 333-382 (WTKEDDINLVRRIAELEVEDENEINWDILASGWSSVRSPQWLRSKWWTIK). The disordered stretch occupies residues 568 to 645 (VKEEPSENQT…ILENQEEGSN (78 aa)). A compositionally biased stretch (basic and acidic residues) spans 587-597 (EQSKQGEKTLD). Over residues 615–625 (IPTNEDISSDS) the composition is skewed to polar residues.

It belongs to the DMTF1 family.

Its subcellular location is the nucleus. In terms of biological role, transcriptional activator which activates the CDKN2A/ARF locus in response to Ras-Raf signaling, thereby promoting p53/TP53-dependent growth arrest. Binds to the consensus sequence 5'-CCCG[GT]ATGT-3'. This Danio rerio (Zebrafish) protein is Cyclin-D-binding Myb-like transcription factor 1 (dmtf1).